The primary structure comprises 334 residues: Methionine import ATP-binding protein MetN (334 aa).

The ABC transporter domain occupies 7–246; the sequence is VEFRSVSKVF…PRSAPARAFV (240 aa). 43–50 serves as a coordination point for ATP; it reads GYSGAGKS.

It belongs to the ABC transporter superfamily. Methionine importer (TC 3.A.1.24) family. As to quaternary structure, the complex is composed of two ATP-binding proteins (MetN), two transmembrane proteins (MetI) and a solute-binding protein (MetQ).

Its subcellular location is the cell membrane. It carries out the reaction L-methionine(out) + ATP + H2O = L-methionine(in) + ADP + phosphate + H(+). It catalyses the reaction D-methionine(out) + ATP + H2O = D-methionine(in) + ADP + phosphate + H(+). Its function is as follows. Part of the ABC transporter complex MetNIQ involved in methionine import. Responsible for energy coupling to the transport system. This is Methionine import ATP-binding protein MetN from Nocardia farcinica (strain IFM 10152).